We begin with the raw amino-acid sequence, 21 residues long: Fibrinogen beta chain (21 aa).

Position 1 is a pyrrolidone carboxylic acid (glutamine 1). Positions 1-11 are enriched in acidic residues; that stretch reads QFPTDYDEGED. A disordered region spans residues 1–21; that stretch reads QFPTDYDEGEDDRPKSGLGAR. O-linked (GalNAc...) threonine glycosylation occurs at threonine 4. Residue tyrosine 6 is modified to Sulfotyrosine.

As to quaternary structure, heterohexamer; disulfide linked. Contains 2 sets of 3 non-identical chains (alpha, beta and gamma). The 2 heterotrimers are in head to head conformation with the N-termini in a small central domain. Post-translationally, conversion of fibrinogen to fibrin is triggered by thrombin, which cleaves fibrinopeptides A and B from alpha and beta chains, and thus exposes the N-terminal polymerization sites responsible for the formation of the soft clot.

The protein resides in the secreted. Cleaved by the protease thrombin to yield monomers which, together with fibrinogen alpha (FGA) and fibrinogen gamma (FGG), polymerize to form an insoluble fibrin matrix. Fibrin has a major function in hemostasis as one of the primary components of blood clots. In addition, functions during the early stages of wound repair to stabilize the lesion and guide cell migration during re-epithelialization. Was originally thought to be essential for platelet aggregation, based on in vitro studies using anticoagulated blood. However subsequent studies have shown that it is not absolutely required for thrombus formation in vivo. Enhances expression of SELP in activated platelets. Maternal fibrinogen is essential for successful pregnancy. Fibrin deposition is also associated with infection, where it protects against IFNG-mediated hemorrhage. May also facilitate the antibacterial immune response via both innate and T-cell mediated pathways. The protein is Fibrinogen beta chain (FGB) of Syncerus caffer (African buffalo).